A 425-amino-acid chain; its full sequence is Serine--tRNA ligase (425 aa).

232-234 provides a ligand contact to L-serine; sequence TSE. Residues 263 to 265 and Val-279 each bind ATP; that span reads RRE. Glu-286 serves as a coordination point for L-serine. Residue 350–353 coordinates ATP; that stretch reads EVVS. Residue Thr-387 participates in L-serine binding.

It belongs to the class-II aminoacyl-tRNA synthetase family. Type-1 seryl-tRNA synthetase subfamily. As to quaternary structure, homodimer. The tRNA molecule binds across the dimer.

It is found in the cytoplasm. The catalysed reaction is tRNA(Ser) + L-serine + ATP = L-seryl-tRNA(Ser) + AMP + diphosphate + H(+). It catalyses the reaction tRNA(Sec) + L-serine + ATP = L-seryl-tRNA(Sec) + AMP + diphosphate + H(+). The protein operates within aminoacyl-tRNA biosynthesis; selenocysteinyl-tRNA(Sec) biosynthesis; L-seryl-tRNA(Sec) from L-serine and tRNA(Sec): step 1/1. Functionally, catalyzes the attachment of serine to tRNA(Ser). Is also able to aminoacylate tRNA(Sec) with serine, to form the misacylated tRNA L-seryl-tRNA(Sec), which will be further converted into selenocysteinyl-tRNA(Sec). This Methanocella arvoryzae (strain DSM 22066 / NBRC 105507 / MRE50) protein is Serine--tRNA ligase.